A 161-amino-acid polypeptide reads, in one-letter code: Nucleotide-binding protein Shewmr4_3156 (161 aa).

It belongs to the YajQ family.

Nucleotide-binding protein. This Shewanella sp. (strain MR-4) protein is Nucleotide-binding protein Shewmr4_3156.